The sequence spans 127 residues: MTALPTDFLYSEEHEWVNTSAVVEGETVRVGITHIAAEALGDIVFVELPEVGSEVEAGEAFGEVESTKSVSDIYAPVSGEVVAVNEALEDNAGLINEDPYGEGWLYEVKVTEAGELMEAEAYQAANE.

The Lipoyl-binding domain maps to 27–109; sequence TVRVGITHIA…YGEGWLYEVK (83 aa). Residue K68 is modified to N6-lipoyllysine.

The protein belongs to the GcvH family. As to quaternary structure, the glycine cleavage system is composed of four proteins: P, T, L and H. The cofactor is (R)-lipoate.

In terms of biological role, the glycine cleavage system catalyzes the degradation of glycine. The H protein shuttles the methylamine group of glycine from the P protein to the T protein. The chain is Glycine cleavage system H protein from Corynebacterium jeikeium (strain K411).